The sequence spans 434 residues: Glutamyl-tRNA reductase (434 aa).

Residues 57-60 (TCNR), Ser116, 121-123 (ETQ), and Gln127 contribute to the substrate site. Cys58 acts as the Nucleophile in catalysis. 196–201 (GAGEMI) contacts NADP(+).

It belongs to the glutamyl-tRNA reductase family. In terms of assembly, homodimer.

It carries out the reaction (S)-4-amino-5-oxopentanoate + tRNA(Glu) + NADP(+) = L-glutamyl-tRNA(Glu) + NADPH + H(+). Its pathway is porphyrin-containing compound metabolism; protoporphyrin-IX biosynthesis; 5-aminolevulinate from L-glutamyl-tRNA(Glu): step 1/2. Catalyzes the NADPH-dependent reduction of glutamyl-tRNA(Glu) to glutamate 1-semialdehyde (GSA). The sequence is that of Glutamyl-tRNA reductase from Burkholderia pseudomallei (strain 1106a).